The sequence spans 110 residues: U9-agatoxin-Ao1a (110 aa).

Residues 1–17 (MKLLLAIAGLFLVQTLA) form the signal peptide. Positions 18–38 (EDVRAHEESSFLAAVAPEEQR) are excised as a propeptide. 5 disulfide bridges follow: C40–C54, C47–C60, C51–C87, C53–C72, and C62–C70.

It belongs to the neurotoxin 37 family. Expressed by the venom gland.

It localises to the secreted. This chain is U9-agatoxin-Ao1a, found in Agelena orientalis (Funnel-web spider).